We begin with the raw amino-acid sequence, 436 residues long: UPF0597 protein YhaM (436 aa).

Belongs to the UPF0597 family.

The polypeptide is UPF0597 protein YhaM (Shigella dysenteriae serotype 1 (strain Sd197)).